The chain runs to 943 residues: Glutamate receptor ionotropic, NMDA 1 (943 aa).

Positions Met1–Ala20 are cleaved as a signal peptide. At Ala21–Gln580 the chain is on the extracellular side. Residues Asn61, Asn224, Asn260, Asn297, Asn321, Asn371, Asn389, Asn461, Asn492, and Asn512 are each glycosylated (N-linked (GlcNAc...) asparagine). Residues Cys79 and Cys329 are joined by a disulfide bond. 2 disulfide bridges follow: Cys441/Cys475 and Cys457/Cys476. Glycine is bound by residues Pro537, Thr539, and Arg544. Residues Ser581–Leu601 form a helical membrane-spanning segment. Over Asp602–Thr623 the chain is Cytoplasmic. An intramembrane region (discontinuously helical) is located at residues Leu624–Pro645. The pore-forming stretch occupies residues Leu624 to Pro645. Over Arg646 to Arg651 the chain is Cytoplasmic. The chain crosses the membrane as a helical span at residues Ile652–Tyr668. The Extracellular portion of the chain corresponds to Thr669–Asn833. Asn695 carries N-linked (GlcNAc...) asparagine glycosylation. Residues Ser709 and Asp753 each coordinate glycine. Cys765 and Cys819 form a disulfide bridge. Asn792 is a glycosylation site (N-linked (GlcNAc...) asparagine). Residues Met834 to Ile854 traverse the membrane as a helical segment. Residues Glu855–Val943 lie on the Cytoplasmic side of the membrane. 4 positions are modified to phosphoserine: Ser910, Ser911, Ser917, and Ser918.

This sequence belongs to the glutamate-gated ion channel (TC 1.A.10.1) family. NR1/GRIN1 subfamily. In terms of assembly, heterotetramer; the NMDAR subunits are modular and harbor tiered domains that function in concert to regulate opening and closing of the cation-selective ion channel pore. Forms heterotetrameric channels composed of two GluN1/zeta subunits (GRIN1), and two identical GluN2/epsilon subunits (GRIN2A, GRIN2B, GRIN2C or GRIN2D) or GluN3 subunits (GRIN3A or GRIN3B) (in vitro). Can also form heterotetrameric channels that contain at least two GluN1 subunits and at least two different GluN2 subunits (or a combination of one GluN2 and one GluN3 subunits) (in vitro). In vivo, the subunit composition may vary in function of the expression levels of the different subunits. Found in a complex with GRIN2A or GRIN2B, GRIN3A and PPP2CB. Found in a complex with GRIN2A or GRIN2B and GRIN3B. Interacts with SNX27 (via PDZ domain); the interaction is required for recycling to the plasma membrane when endocytosed and prevent degradation in lysosomes. Interacts with DLG4 and MPDZ. Interacts with LRFN1 and LRFN2. Interacts with MYZAP. Found in a complex with DLG4 and PRR7. Found in a complex with GRIN2B and PRR7. Interacts with PRR7; the interaction is reduced following NMDA receptor activity. Post-translationally, NMDA is probably regulated by C-terminal phosphorylation of an isoform of GRIN1 by PKC. Dephosphorylated on Ser-897 probably by protein phosphatase 2A (PPP2CB). Its phosphorylated state is influenced by the formation of the NMDAR-PPP2CB complex and the NMDAR channel activity.

Its subcellular location is the cell membrane. It is found in the postsynaptic cell membrane. The protein localises to the postsynaptic density membrane. It localises to the synaptic cell membrane. The catalysed reaction is Ca(2+)(in) = Ca(2+)(out). It catalyses the reaction Na(+)(in) = Na(+)(out). The enzyme catalyses K(+)(in) = K(+)(out). Functionally, component of N-methyl-D-aspartate (NMDA) receptors (NMDARs) that function as heterotetrameric, ligand-gated cation channels with high calcium permeability and voltage-dependent block by Mg(2+). NMDARs participate in synaptic plasticity for learning and memory formation by contributing to the long-term potentiation (LTP). Channel activation requires binding of the neurotransmitter L-glutamate to the GluN2 subunit, glycine or D-serine binding to the GluN1 subunit, plus membrane depolarization to eliminate channel inhibition by Mg(2+). NMDARs mediate simultaneously the potasium efflux and the influx of calcium and sodium. Each GluN2 or GluN3 subunit confers differential attributes to channel properties, including activation, deactivation and desensitization kinetics, pH sensitivity, Ca2(+) permeability, and binding to allosteric modulators. The GluN3 subunits confer distinctive ion channel activation mechanism, which relies exclusively on glycine and does not involve glutamate. This is Glutamate receptor ionotropic, NMDA 1 from Canis lupus familiaris (Dog).